A 377-amino-acid polypeptide reads, in one-letter code: UPF0754 membrane protein lmo2224 (377 aa).

2 helical membrane-spanning segments follow: residues 1–21 and 357–377; these read MSVL…GAMT and YLGG…AMWI.

It belongs to the UPF0754 family.

The protein localises to the cell membrane. In Listeria monocytogenes serovar 1/2a (strain ATCC BAA-679 / EGD-e), this protein is UPF0754 membrane protein lmo2224.